The sequence spans 186 residues: Ribosome-recycling factor (186 aa).

Belongs to the RRF family.

It is found in the cytoplasm. Its function is as follows. Responsible for the release of ribosomes from messenger RNA at the termination of protein biosynthesis. May increase the efficiency of translation by recycling ribosomes from one round of translation to another. The sequence is that of Ribosome-recycling factor from Burkholderia multivorans (strain ATCC 17616 / 249).